The primary structure comprises 383 residues: Probable purine permease 16 (383 aa).

10 consecutive transmembrane segments (helical) span residues 30 to 50 (ISVFICGFLIFAGDSLVMLLL), 72 to 92 (WTQALIQNAAFPILIPFFFIL), 113 to 133 (VLSLYVSLGVLVSVYSKLYAL), 138 to 158 (VGWGILLSTQLILTSLFSAFI), 166 to 186 (WIIISIIFTLGADFFGGPAFA), 203 to 223 (LILIFPTLAFSLSLCLMQLGF), 247 to 267 (ICVSFIATLICTVGLFASGEF), 297 to 317 (VWAVGLLGLVLLVSGLFADVV), 322 to 342 (SPVVALLVVLAFDFMDDEFGW), and 346 to 363 (GALLGAVLALASYFYSLH).

This sequence belongs to the purine permeases (TC 2.A.7.14) family.

Its subcellular location is the membrane. This chain is Probable purine permease 16 (PUP16), found in Arabidopsis thaliana (Mouse-ear cress).